The sequence spans 531 residues: Transactivator/viroplasmin protein (531 aa).

Disordered stretches follow at residues 80 to 101 (ASGK…TATG) and 505 to 531 (CKSE…SVLV). Polar residues-rich tracts occupy residues 91–100 (SATSPEQTAT) and 505–517 (CKSE…TSEE). Over residues 518 to 531 (GLQESEDEDFSVLV) the composition is skewed to acidic residues.

It belongs to the caulimoviridae viroplasmin family.

Its subcellular location is the host cytoplasm. In terms of biological role, enhances the translation of downstream ORFs on polycistronic mRNAs. The polypeptide is Transactivator/viroplasmin protein (Cestrum yellow leaf curling virus (CmYLCV)).